The following is a 347-amino-acid chain: Melanoma-associated antigen B10 (347 aa).

The segment covering 1–18 has biased composition (basic residues); sequence MPRGQKSKLRAREKRRQA. 2 disordered regions span residues 1–20 and 56–92; these read MPRG…QARG and GASN…QMEE. Residues 67-78 are compositionally biased toward low complexity; sequence AQSTSTSATAAS. A compositionally biased stretch (basic and acidic residues) spans 81–92; sequence RHPEGVNDQMEE. Residues 111-310 form the MAGE domain; the sequence is VDEKVIILVH…SEFSNWYTEA (200 aa). The disordered stretch occupies residues 328–347; it reads VSATAGARSKVKSSKSSQLQ.

This Homo sapiens (Human) protein is Melanoma-associated antigen B10 (MAGEB10).